The following is a 559-amino-acid chain: Peptidyl-prolyl isomerase cwc27 (559 aa).

In terms of domain architecture, PPIase cyclophilin-type spans 11–184 (PTASATLHTT…YPVKVVSCEV (174 aa)). Disordered stretches follow at residues 201-395 (ATAP…GFSS), 413-449 (ESAD…EDEE), and 518-559 (PRER…REKP). A compositionally biased stretch (basic and acidic residues) spans 261 to 273 (APKKTSPEAEQQT). The span at 305-319 (LPDPESPARSPPQSP) shows a compositional bias: pro residues. Composition is skewed to polar residues over residues 384–394 (GSSTNGVTGFS) and 425–442 (TSIS…AKSN).

Belongs to the cyclophilin-type PPIase family. CWC27 subfamily. In terms of assembly, associated with the spliceosome.

The protein resides in the cytoplasm. The protein localises to the nucleus. It catalyses the reaction [protein]-peptidylproline (omega=180) = [protein]-peptidylproline (omega=0). Functionally, PPIases accelerate the folding of proteins. It catalyzes the cis-trans isomerization of proline imidic peptide bonds in oligopeptides. Involved in pre-mRNA splicing. The protein is Peptidyl-prolyl isomerase cwc27 (cwc27) of Aspergillus fumigatus (strain ATCC MYA-4609 / CBS 101355 / FGSC A1100 / Af293) (Neosartorya fumigata).